We begin with the raw amino-acid sequence, 3072 residues long: Platelet binding protein GspB (3072 aa).

The first 85 residues, 1–85 (MFFKRQKGQY…AVLGGAVVTS (85 aa)), serve as a signal peptide directing secretion. Disordered regions lie at residues 117 to 147 (EAAT…SASS), 182 to 254 (SESL…APNV), 876 to 909 (SAST…SVSA), 936 to 969 (SAST…SVSA), 1024 to 2085 (SASV…SVSA), 2106 to 2139 (SAST…SVSA), 2173 to 2223 (VSAS…SVSA), 2250 to 2595 (SAST…SVSA), 2625 to 2965 (TSAS…NASV), and 3014 to 3045 (SQSL…GESE). Polar residues predominate over residues 118–127 (AATTLSSTEA). Residues 123–236 (SSTEANPVES…SSQQSTEASS (114 aa)) form a ser-rich region 1 (SSR1) region. Low complexity-rich tracts occupy residues 131 to 147 (ESLS…SASS) and 182 to 238 (SESL…SSQT). The tract at residues 237–603 (QTGRRRTRRA…GSKFIDTRAG (367 aa)) is basic region (BR). Residues 604-3028 (SISKSQSTSN…ESQSSSASQS (2425 aa)) are ser-rich region 2 (SSR2). Low complexity predominate over residues 3014–3028 (SQSLSESQSSSASQS). The short motif at 3038-3042 (LPRTG) is the LPXTG sorting signal element. Threonine 3041 bears the Pentaglycyl murein peptidoglycan amidated threonine mark. Residues 3042–3072 (GESENKASILALGLGALGLAFKKRKKNESED) constitute a propeptide, removed by sortase.

The protein belongs to the serine-rich repeat protein (SRRP) family. As to quaternary structure, both SSR domains in the unglycosylated protein bind to Asp2 and Asp3; glycosylated protein binds less well. Interacts with the human cell surface glycoprotein GP1BA. Proteolytically cleaved by a metalloprotease. Post-translationally, both SSR1 and SSR2 domains are glycosylated. A truncated derivative (residues 1-2062) contains 105 nmol per nmol of protein, suggesting at least 10% of the apparent molecular weight is due to carbohydrates. Glucose and N-acetylglucosamine are present in a ratio of 30:73 residues per truncated polypeptide, as well as minor amounts of galactose and N-acetylgalactosamine. Glycosylation occurs intracellularly in the Ser-rich regions SSR1 and SSR2. Glycosylation of SSR2 domain may be required to prevent aggregation of GspB. It is probable that most of the Ser residues in SSR1 and SSR2 are O-GlcNAcylated. Sequential glycosylation by sugar transferases are able to generate complex sugar polymorphisms.

It localises to the secreted. The protein localises to the cell wall. Functionally, plays a role in virulence and host-pathogen interactions. Mediates binding to human platelets via interaction with the human cell surface glycoprotein GP1BA. Plays a positive role in biofilm formation, possibly by self-association via the basic region (BR). The chain is Platelet binding protein GspB (gspB) from Streptococcus gordonii.